An 874-amino-acid polypeptide reads, in one-letter code: Alanine--tRNA ligase (874 aa).

Zn(2+) contacts are provided by histidine 562, histidine 566, cysteine 664, and histidine 668.

Belongs to the class-II aminoacyl-tRNA synthetase family. Zn(2+) is required as a cofactor.

Its subcellular location is the cytoplasm. It carries out the reaction tRNA(Ala) + L-alanine + ATP = L-alanyl-tRNA(Ala) + AMP + diphosphate. Its function is as follows. Catalyzes the attachment of alanine to tRNA(Ala) in a two-step reaction: alanine is first activated by ATP to form Ala-AMP and then transferred to the acceptor end of tRNA(Ala). Also edits incorrectly charged Ser-tRNA(Ala) and Gly-tRNA(Ala) via its editing domain. In Shewanella woodyi (strain ATCC 51908 / MS32), this protein is Alanine--tRNA ligase.